Here is a 178-residue protein sequence, read N- to C-terminus: Large ribosomal subunit protein uL6c (178 aa).

This sequence belongs to the universal ribosomal protein uL6 family. Part of the 50S ribosomal subunit.

Its subcellular location is the plastid. The protein resides in the chloroplast. Binds 23S rRNA. This Phaeodactylum tricornutum (strain CCAP 1055/1) protein is Large ribosomal subunit protein uL6c (rpl6).